The sequence spans 428 residues: Glutamate-1-semialdehyde 2,1-aminomutase (428 aa).

Lys-267 is subject to N6-(pyridoxal phosphate)lysine.

It belongs to the class-III pyridoxal-phosphate-dependent aminotransferase family. HemL subfamily. In terms of assembly, homodimer. The cofactor is pyridoxal 5'-phosphate.

Its subcellular location is the cytoplasm. It carries out the reaction (S)-4-amino-5-oxopentanoate = 5-aminolevulinate. It participates in porphyrin-containing compound metabolism; protoporphyrin-IX biosynthesis; 5-aminolevulinate from L-glutamyl-tRNA(Glu): step 2/2. Its pathway is porphyrin-containing compound metabolism; chlorophyll biosynthesis. This Prochlorococcus marinus (strain MIT 9313) protein is Glutamate-1-semialdehyde 2,1-aminomutase.